A 410-amino-acid chain; its full sequence is MVASNQSEVNIGMVGHVDHGKTSLTRKLTGVWTDTHSEELKRGISIRLGYADCEIKKCESCNEPECYTVDKKCDCCSGKVETLRKISFVDAPGHETLMATMLSGASLMDGAILVIAASEECPQPQTKEHLMALDALGVKNILIVQNKIDLVTEEQAVENYEQIQKFTKGTVAEKAPIIPVSAHHGANLDVLLKAIQEFIPTPKRDETVSPRLYVARSFDVNKPGSEIKDLKGGVIGGSIIQGILKVGDEIEIRPGSKVVEGNKTKWVPIITKIISLGAGSKKLKTALPGGLIGVGTELDPNLTKSDALSGSLAGIPGTLPETLEKITIRPQLLERVVGSQDELLIEPLKTNEVLMLNVGTSTTVGVTVSAKAEKVEIKLKLPVCADSGDRVAISRKIGSRWRLIGYGIIL.

The region spanning 6–203 is the tr-type G domain; the sequence is QSEVNIGMVG…AIQEFIPTPK (198 aa). Residues 15-22 are G1; it reads GHVDHGKT. The Mg(2+) site is built by Asp-18, Thr-22, Gly-43, and Ser-45. A GTP-binding site is contributed by 18 to 23; that stretch reads DHGKTS. The segment at 43-47 is G2; that stretch reads GISIR. Residues Cys-58, Cys-61, Cys-73, and Cys-76 each contribute to the Zn(2+) site. A G3 region spans residues 90-93; the sequence is DAPG. Residues 146-149 and 181-183 contribute to the GTP site; these read NKID and SAH. The tract at residues 146–149 is G4; it reads NKID. Residues 181 to 183 are G5; sequence SAH.

This sequence belongs to the TRAFAC class translation factor GTPase superfamily. Classic translation factor GTPase family. EIF2G subfamily. As to quaternary structure, heterotrimer composed of an alpha, a beta and a gamma chain. It depends on Mg(2+) as a cofactor.

The catalysed reaction is GTP + H2O = GDP + phosphate + H(+). EIF-2 functions in the early steps of protein synthesis by forming a ternary complex with GTP and initiator tRNA. This is Translation initiation factor 2 subunit gamma from Methanococcus vannielii (strain ATCC 35089 / DSM 1224 / JCM 13029 / OCM 148 / SB).